A 185-amino-acid polypeptide reads, in one-letter code: Elongation factor P (185 aa).

Belongs to the elongation factor P family.

The protein localises to the cytoplasm. The protein operates within protein biosynthesis; polypeptide chain elongation. Functionally, involved in peptide bond synthesis. Stimulates efficient translation and peptide-bond synthesis on native or reconstituted 70S ribosomes in vitro. Probably functions indirectly by altering the affinity of the ribosome for aminoacyl-tRNA, thus increasing their reactivity as acceptors for peptidyl transferase. This Clostridium perfringens (strain ATCC 13124 / DSM 756 / JCM 1290 / NCIMB 6125 / NCTC 8237 / Type A) protein is Elongation factor P.